Reading from the N-terminus, the 602-residue chain is Transcription factor COE4 (602 aa).

The interaction with DNA stretch occupies residues 64-67; the sequence is RKSN. A C5-type zinc finger spans residues 152 to 171; the sequence is CRVLLTHEIMCSRCCDRKSC. 2 interaction with DNA regions span residues 198–205 and 237–240; these read NCLKNAGN and NNSK. In terms of domain architecture, IPT/TIG spans 256–338; the sequence is PCIKAISPGE…CKGCPGRFVY (83 aa). Disordered stretches follow at residues 448 to 476 and 558 to 602; these read PEPG…SGYG and PVLR…LAYS. Residues 560–569 show a composition bias toward pro residues; sequence LRPPSSPPQA.

The protein belongs to the COE family. Forms either a homodimer or a heterodimer with a related family member. Interacts with MAPK3/ERK1. Interacts with STAT5A. In terms of tissue distribution, most highly expressed in cytotoxic NK cells, especially CD16(+) NK cells, followed by CD8(+) T-cells.

The protein localises to the nucleus. Its function is as follows. Transcription factor. Binds to specific sequence motif 5'-CCCNNG[GA]G-3' in regulatory elements of putative target immunoregulatory genes such as NKG7, GZMA, and TBX21. Positively modulates transcription of NKG7. May play a role in regulating FAS/CD95-mediated apoptosis in cytotoxic NK cells and T-cells, probably downstream of interleukin IL2 signaling. The sequence is that of Transcription factor COE4 (EBF4) from Homo sapiens (Human).